The following is a 489-amino-acid chain: Putative L,D-transpeptidase HI_1667 (489 aa).

Residues 10-29 traverse the membrane as a helical segment; it reads LSLFALSLSMMMSGCVLVGL. The region spanning 254 to 433 is the L,D-TPase catalytic domain; the sequence is NGIFVNIPSY…ETRKNTVLAS (180 aa). His-384 acts as the Proton donor/acceptor in catalysis. Cys-403 serves as the catalytic Nucleophile.

Belongs to the YkuD family.

It localises to the membrane. Its pathway is cell wall biogenesis; peptidoglycan biosynthesis. This is Putative L,D-transpeptidase HI_1667 from Haemophilus influenzae (strain ATCC 51907 / DSM 11121 / KW20 / Rd).